The chain runs to 549 residues: Cation/acetate symporter ActP (549 aa).

A run of 13 helical transmembrane segments spans residues 33–53 (WQAI…TYWA), 77–97 (LAIA…ALVF), 103–123 (GLIY…LIAE), 148–168 (ILSA…QMVG), 183–203 (IAVV…GMLA), 206–226 (WVQI…AFMV), 262–282 (ISAL…PHIL), 303–323 (GFMG…IMLV), 355–375 (LFLG…VAGL), 404–424 (VSKI…ILFE), 428–448 (IAFM…PIIL), 464–484 (GGWL…TIWV), and 493–513 (IFPY…GIWF).

It belongs to the sodium:solute symporter (SSF) (TC 2.A.21) family.

The protein resides in the cell inner membrane. Its function is as follows. Transports acetate. This is Cation/acetate symporter ActP from Salmonella newport (strain SL254).